The chain runs to 263 residues: Very long chain fatty acid elongase F (263 aa).

7 consecutive transmembrane segments (helical) span residues 10-30 (IPVF…LLFV), 55-75 (IFQI…LFVL), 98-118 (LICI…IFFV), 135-155 (FAMA…GVAF), 159-179 (LCLL…LSSI), 193-213 (ITIA…ITLA), and 223-243 (LTYG…QFYY).

Belongs to the ELO family. No expression in adults.

It is found in the endoplasmic reticulum membrane. The catalysed reaction is a very-long-chain acyl-CoA + malonyl-CoA + H(+) = a very-long-chain 3-oxoacyl-CoA + CO2 + CoA. Condensing enzyme that elongates saturated and monounsaturated very long chain fatty acids, to yield products up to 30 carbons in length. The protein is Very long chain fatty acid elongase F of Drosophila simulans (Fruit fly).